We begin with the raw amino-acid sequence, 410 residues long: BTB/POZ and MATH domain-containing protein 5 (410 aa).

The disordered stretch occupies residues M1–T24. In terms of domain architecture, MATH spans N28–V162. One can recognise a BTB domain in the interval S198–V264.

This sequence belongs to the Tdpoz family. Heterodimer with BPM1 and BPM3. Interacts with RAP2-4. Binds to MYB56 at the promoter of FLOWERING LOCUS T (FT). Ubiquitous.

It localises to the nucleus. Its subcellular location is the cytoplasm. The protein operates within protein modification; protein ubiquitination. Functionally, may act as a substrate-specific adapter of an E3 ubiquitin-protein ligase complex (CUL3-RBX1-BTB) which mediates the ubiquitination and subsequent proteasomal degradation of target proteins. The chain is BTB/POZ and MATH domain-containing protein 5 (BPM5) from Arabidopsis thaliana (Mouse-ear cress).